A 319-amino-acid chain; its full sequence is Probable murein peptide carboxypeptidase (319 aa).

Serine 116 serves as the catalytic Nucleophile. Catalysis depends on charge relay system residues glutamate 214 and histidine 284.

Belongs to the peptidase S66 family.

It is found in the cytoplasm. The protein operates within cell wall degradation; peptidoglycan degradation. Functionally, may be involved in the degradation of peptidoglycan by catalyzing the cleavage of the terminal D-alanine residue from cytoplasmic murein peptides. This chain is Probable murein peptide carboxypeptidase (ykfA), found in Bacillus subtilis (strain 168).